The sequence spans 461 residues: Serine carboxypeptidase-like 51 (461 aa).

Positions 1 to 20 (MKTTVVYLVILCLIVSCTNG) are cleaved as a signal peptide. N-linked (GlcNAc...) asparagine glycans are attached at residues Asn99 and Asn152. Residue Ser166 is part of the active site. Asn340 carries an N-linked (GlcNAc...) asparagine glycan. Residues Asp379 and His438 contribute to the active site.

It belongs to the peptidase S10 family. As to expression, expressed in seedlings, roots, flowers and siliques.

It is found in the secreted. Probable carboxypeptidase. This Arabidopsis thaliana (Mouse-ear cress) protein is Serine carboxypeptidase-like 51 (SCPL51).